The sequence spans 621 residues: Phosphatidylinositol-3,5-bisphosphate 3-phosphatase MTMR6 (621 aa).

One can recognise a GRAM domain in the interval 1–101 (MEHIRTTKVE…YNSLLQLSKQ (101 aa)). The tract at residues 2–141 (EHIRTTKVEQ…EEYKRMGVPN (140 aa)) is interaction with RAB1B. Position 108 is a phosphotyrosine (tyrosine 108). A Myotubularin phosphatase domain is found at 124-499 (GWQLIDLAEE…FNFKFWRNMY (376 aa)). Positions 248, 273, and 274 each coordinate a 1,2-diacyl-sn-glycero-3-phospho-(1D-myo-inositol-3,5-bisphosphate). Residues asparagine 248, asparagine 273, and isoleucine 274 each coordinate a 1,2-diacyl-sn-glycero-3-phospho-(1D-myo-inositol-3-phosphate). The Phosphocysteine intermediate role is filled by cysteine 336. 8 residues coordinate a 1,2-diacyl-sn-glycero-3-phospho-(1D-myo-inositol-3,5-bisphosphate): serine 337, aspartate 338, glycine 339, tryptophan 340, aspartate 341, arginine 342, lysine 378, and arginine 382. A 1,2-diacyl-sn-glycero-3-phospho-(1D-myo-inositol-3-phosphate) is bound by residues serine 337, aspartate 338, glycine 339, tryptophan 340, aspartate 341, and arginine 342. A 1,2-diacyl-sn-glycero-3-phospho-(1D-myo-inositol-3-phosphate) is bound at residue arginine 382. A phosphoserine mark is found at serine 556, serine 561, serine 589, and serine 611.

Belongs to the protein-tyrosine phosphatase family. Non-receptor class myotubularin subfamily. As to quaternary structure, homodimer. Heterodimer (via C-terminus) with MTMR9 (via C-terminus). Interacts with ALKBH4. Interacts with KCNN4. Interacts (via GRAM domain) with RAB1B (in GDP-bound form); the interaction regulates MTMR6 recruitment to the endoplasmic reticulum-Golgi intermediate compartment. In terms of tissue distribution, expressed in CD4+ T-cells.

The protein resides in the cytoplasm. Its subcellular location is the endoplasmic reticulum-Golgi intermediate compartment. It is found in the endoplasmic reticulum. It localises to the cell projection. The protein localises to the ruffle membrane. The protein resides in the perinuclear region. It catalyses the reaction a 1,2-diacyl-sn-glycero-3-phospho-(1D-myo-inositol-3,5-bisphosphate) + H2O = a 1,2-diacyl-sn-glycero-3-phospho-(1D-myo-inositol-5-phosphate) + phosphate. It carries out the reaction a 1,2-diacyl-sn-glycero-3-phospho-(1D-myo-inositol-3-phosphate) + H2O = a 1,2-diacyl-sn-glycero-3-phospho-(1D-myo-inositol) + phosphate. The catalysed reaction is 1,2-dioctanoyl-sn-glycero-3-phospho-(1D-myo-inositol-3,5-bisphosphate) + H2O = 1,2-dioctanoyl-sn-glycero-3-phospho-(1D-myo-inositol-5-phosphate) + phosphate. The enzyme catalyses 1,2-dioctanoyl-sn-glycero-3-phospho-(1-D-myo-inositol-3-phosphate) + H2O = 1,2-dioctanoyl-sn-glycero-3-phospho-(1D-myo-inositol) + phosphate. Its activity is regulated as follows. Allosterically activated by phosphatidylserine and/or phosphatidylinositol 4-phosphate (PtdIns(4)P), and phosphatidylinositol 5-phosphate (PtdIns(5)P). Interaction with MTMR9 increases catalytic activity towards phosphatidylinositol 3,5-bisphosphate. Its function is as follows. Lipid phosphatase that specifically dephosphorylates the D-3 position of phosphatidylinositol 3-phosphate and phosphatidylinositol 3,5-bisphosphate, generating phosphatidylinositol and phosphatidylinositol 5-phosphate. Binds with high affinity to phosphatidylinositol 3,5-bisphosphate (PtdIns(3,5)P2) but also to phosphatidylinositol 3-phosphate (PtdIns(3)P), phosphatidylinositol 4-phosphate (PtdIns(4)P), and phosphatidylinositol 5-phosphate (PtdIns(5)P), phosphatidic acid and phosphatidylserine. Negatively regulates ER-Golgi protein transport. Probably in association with MTMR9, plays a role in the late stages of macropinocytosis by dephosphorylating phosphatidylinositol 3-phosphate in membrane ruffles. Acts as a negative regulator of KCNN4/KCa3.1 channel activity in CD4(+) T-cells possibly by decreasing intracellular levels of phosphatidylinositol 3-phosphate. Negatively regulates proliferation of reactivated CD4(+) T-cells. In complex with MTMR9, negatively regulates DNA damage-induced apoptosis. The formation of the MTMR6-MTMR9 complex stabilizes both MTMR6 and MTMR9 protein levels. This is Phosphatidylinositol-3,5-bisphosphate 3-phosphatase MTMR6 from Homo sapiens (Human).